Consider the following 451-residue polypeptide: MATHAALASTRIPTNTRFPSKTSHSFPSQCASKRLEVGEFSGLKSTSCISYVHSARDSSFYDVVAAQLTSKANGSTAVKGVTVAKLKVAINGFGRIGRNFLRCWHGRKDSPLEVIVVNDSGGVKNASHLLKYDSMLGTFKAEVKILNNETITVDGKPIKVVSSRDPLKLPWAELGIDIVIEGTGVFVDGPGAGKHIQAGAKKVIITAPAKGADIPTYVIGVNEQDYGHEVADIISNASCTTNCLAPFAKVLDEEFGIVKGTMTTTHSYTGDQRLLDASHRDLRRARAAALNIVPTSTGAAKAVSLVLPQLKGKLNGIALRVPTPNVSVVDLVVNVAKKGISAEDVNAAFRKAAEGPLKGILDVCDVPLVSVDFRCSDVSTTIDSSLTMVMGDDMVKVVAWYDNEWGYSQRVVDLAHLVANKWPGTPKVGSGDPLEDFCETNPADEECKVYE.

The segment at 1-25 is disordered; that stretch reads MATHAALASTRIPTNTRFPSKTSHS. The N-terminal 84 residues, 1–84, are a transit peptide targeting the chloroplast; sequence MATHAALAST…STAVKGVTVA (84 aa). The span at 11–25 shows a compositional bias: polar residues; that stretch reads RIPTNTRFPSKTSHS. NADP(+) contacts are provided by residues 95–96, aspartate 119, and arginine 164; that span reads RI. D-glyceraldehyde 3-phosphate-binding positions include 238–240, threonine 269, arginine 284, 297–298, and arginine 320; these read SCT and TG. The active-site Nucleophile is cysteine 239. Asparagine 403 contributes to the NADP(+) binding site.

This sequence belongs to the glyceraldehyde-3-phosphate dehydrogenase family. As to quaternary structure, tetramer of either four A chains (GAPDH 2) or two A and two B chains (GAPDH 1).

The protein localises to the plastid. The protein resides in the chloroplast. It carries out the reaction D-glyceraldehyde 3-phosphate + phosphate + NADP(+) = (2R)-3-phospho-glyceroyl phosphate + NADPH + H(+). Its pathway is carbohydrate biosynthesis; Calvin cycle. This chain is Glyceraldehyde-3-phosphate dehydrogenase B, chloroplastic (GAPB), found in Pisum sativum (Garden pea).